A 209-amino-acid polypeptide reads, in one-letter code: J domain-containing protein spf31 (209 aa).

The region spanning 31 to 96 is the J domain; that stretch reads NAYDVLDILP…KIRESLDSAY (66 aa). Disordered regions lie at residues 149-175 and 187-209; these read ANQQ…EKVW and QDFL…RVLG. Residues 154 to 175 are compositionally biased toward basic and acidic residues; sequence EQARQDEIARERKRRVESEKVW. Over residues 192-209 the composition is skewed to basic residues; the sequence is KTKKNNLKKKNKKPRVLG.

In Schizosaccharomyces pombe (strain 972 / ATCC 24843) (Fission yeast), this protein is J domain-containing protein spf31 (spf31).